The following is a 327-amino-acid chain: Malate dehydrogenase (327 aa).

Residue 12–18 coordinates NAD(+); sequence GAAGQIA. Arg93 and Arg99 together coordinate substrate. NAD(+)-binding positions include Asn106, Gln113, and 130–132; that span reads VGN. Asn132 and Arg163 together coordinate substrate. Catalysis depends on His188, which acts as the Proton acceptor.

This sequence belongs to the LDH/MDH superfamily. MDH type 2 family.

The enzyme catalyses (S)-malate + NAD(+) = oxaloacetate + NADH + H(+). Catalyzes the reversible oxidation of malate to oxaloacetate. In Paraburkholderia phytofirmans (strain DSM 17436 / LMG 22146 / PsJN) (Burkholderia phytofirmans), this protein is Malate dehydrogenase.